The primary structure comprises 264 residues: Thymidylate synthase (264 aa).

A dUMP-binding site is contributed by arginine 21. Histidine 51 serves as a coordination point for (6R)-5,10-methylene-5,6,7,8-tetrahydrofolate. 126–127 provides a ligand contact to dUMP; it reads RR. The active-site Nucleophile is the cysteine 146. Residues 166 to 169, asparagine 177, and 207 to 209 contribute to the dUMP site; these read RSAD and HIY. Aspartate 169 contacts (6R)-5,10-methylene-5,6,7,8-tetrahydrofolate. Alanine 263 is a (6R)-5,10-methylene-5,6,7,8-tetrahydrofolate binding site.

Belongs to the thymidylate synthase family. Bacterial-type ThyA subfamily. As to quaternary structure, homodimer.

The protein resides in the cytoplasm. It catalyses the reaction dUMP + (6R)-5,10-methylene-5,6,7,8-tetrahydrofolate = 7,8-dihydrofolate + dTMP. It participates in pyrimidine metabolism; dTTP biosynthesis. Its function is as follows. Catalyzes the reductive methylation of 2'-deoxyuridine-5'-monophosphate (dUMP) to 2'-deoxythymidine-5'-monophosphate (dTMP) while utilizing 5,10-methylenetetrahydrofolate (mTHF) as the methyl donor and reductant in the reaction, yielding dihydrofolate (DHF) as a by-product. This enzymatic reaction provides an intracellular de novo source of dTMP, an essential precursor for DNA biosynthesis. In Brucella ovis (strain ATCC 25840 / 63/290 / NCTC 10512), this protein is Thymidylate synthase.